The primary structure comprises 364 residues: Pectinesterase 1 (364 aa).

A signal peptide spans 1–22; the sequence is MSCIAVEAVLLGILLYIPIVLS. The N-linked (GlcNAc...) asparagine glycan is linked to Asn103. Asp220 is an active-site residue.

It belongs to the pectinesterase family. Post-translationally, glycosylated. In terms of tissue distribution, expressed in pollen.

It localises to the secreted. The enzyme catalyses [(1-&gt;4)-alpha-D-galacturonosyl methyl ester](n) + n H2O = [(1-&gt;4)-alpha-D-galacturonosyl](n) + n methanol + n H(+). It participates in glycan metabolism; pectin degradation; 2-dehydro-3-deoxy-D-gluconate from pectin: step 1/5. In terms of biological role, catalyzes the demethylesterification of homogalacturonan components of pectin. May be involved in pollen tube development. The sequence is that of Pectinesterase 1 from Olea europaea (Common olive).